The sequence spans 362 residues: 4-hydroxytryptamine kinase (362 aa).

Residues Asn-37, Lys-57, and 118-120 (QDV) contribute to the ATP site. Residue Asp-224 is part of the active site. Position 249 to 251 (249 to 251 (DWE)) interacts with ATP.

This sequence belongs to the methylthioribose kinase family. Monomer. It depends on Mg(2+) as a cofactor.

It carries out the reaction 4-hydroxytryptamine + ATP = norbaeocystin + ADP + H(+). It catalyses the reaction psilocin + ATP = psilocybin + ADP + H(+). The catalysed reaction is 4-hydroxy-N,N,N-trimethyltryptamine + ATP = aeruginascin + ADP + H(+). It functions in the pathway secondary metabolite biosynthesis. Functionally, 4-hydroxytryptamine kinase; part of the gene cluster that mediates the biosynthesis of psilocybin, a psychotropic tryptamine-derived natural product. The first step in the pathway is the decarboxylation of L-tryptophan to tryptamine by the decarboxylase psiD. 4-hydroxy-L-tryptophan is accepted as substrate by psiD as well. The cytochrome P450 monooxygenase psiH then converts tryptamine to 4-hydroxytryptamine. The kinase psiK catalyzes the 4-O-phosphorylation step by converting 4-hydroxytryptamine into norbaeocystin. The methyltransferase psiM then catalyzes iterative methyl transfer to the amino group of norbaeocystin to yield psilocybin via a monomethylated intermediate, baeocystin. 4-hydroxy-6-methyl-l-tryptophancan also be converted the decarboxylase PsiD, kinase PsiK, and methyltransferase PsiM into respectively 6-methyl-norbaeocystin, 6-methylbaeocystin, and 6-methylpsilocybin. PsiK kinase can also turn psilocin into psilocybin. This activity may represent a protective mechanism to rephosphorylate the unstable psilocin to the stable psilocybin in case of intracellular ester cleavage. Moreover, psiK is able to O-phosphorylate the quaternary amine 4-hydroxy-N,N,N-trimethyltryptamine (4-OH-TMT) to yield aeruginascin, another bioactive compound found in Psilocybe species. This is 4-hydroxytryptamine kinase from Psilocybe cubensis (Psychedelic mushroom).